We begin with the raw amino-acid sequence, 353 residues long: G-protein complex alpha subunit gpaA (353 aa).

The disordered stretch occupies residues 1–25; that stretch reads MGCGMSTEDKEGKARNEEIENQLKR. The span at 7–25 shows a compositional bias: basic and acidic residues; it reads TEDKEGKARNEEIENQLKR. A G-alpha domain is found at 32–353; that stretch reads NEIKMLLLGA…QENLRLCGLI (322 aa). Residues 35-48 form a G1 motif region; the sequence is KMLLLGAGESGKST. Serine 47 and threonine 181 together coordinate a divalent metal cation. The G2 motif stretch occupies residues 173–181; the sequence is DVLRSRVKT. The tract at residues 196–205 is G3 motif; the sequence is YRMFDVGGQR. Residues 265 to 272 are G4 motif; the sequence is ILFLNKID. The interval 323-328 is G5 motif; that stretch reads TCATDT.

This sequence belongs to the G-alpha family. G(q) subfamily. In terms of assembly, g proteins are composed of 3 units; alpha, beta and gamma. The alpha chain contains the guanine nucleotide binding site. Interacts with gprM.

Functionally, G-protein complex alpha subunit that plays a role in conidiation and regulation of the biosynthesis of secondary metabolites such as dihydroxynaphthalene (DHN)-melanin, via interaction with the G protein-coupled receptor gprM. The sequence is that of G-protein complex alpha subunit gpaA from Aspergillus fumigatus (strain CBS 144.89 / FGSC A1163 / CEA10) (Neosartorya fumigata).